We begin with the raw amino-acid sequence, 145 residues long: 3-dehydroquinate dehydratase (145 aa).

The active-site Proton acceptor is the Tyr22. Residues Asn71, His77, and Asp84 each coordinate substrate. Residue His97 is the Proton donor of the active site. Residues 98-99 (LS) and Arg108 each bind substrate.

It belongs to the type-II 3-dehydroquinase family. In terms of assembly, homododecamer.

It catalyses the reaction 3-dehydroquinate = 3-dehydroshikimate + H2O. It functions in the pathway metabolic intermediate biosynthesis; chorismate biosynthesis; chorismate from D-erythrose 4-phosphate and phosphoenolpyruvate: step 3/7. In terms of biological role, catalyzes a trans-dehydration via an enolate intermediate. The sequence is that of 3-dehydroquinate dehydratase from Francisella tularensis subsp. mediasiatica (strain FSC147).